Reading from the N-terminus, the 161-residue chain is Large ribosomal subunit protein bL9 (161 aa).

The protein belongs to the bacterial ribosomal protein bL9 family.

Its function is as follows. Binds to the 23S rRNA. The chain is Large ribosomal subunit protein bL9 from Blochmanniella floridana.